The chain runs to 423 residues: MERLISHPPLMIVSDLDHTMVDHQDHENLSLLRFNSLWEYAYRRDSLLVFSTARSPVLYKELRKEKPLLTPDIIITSIGTEIAFGNSMVPDHAWVESLNSCKWNREIVLEETSKFPELTLQPKTEQRLHKVSFYIDEGKGEALTKELSQLLEKRGLDVKIIYSWGKNVDVIPRGAGKGEALEYLLKKLQAEGIFPVNTLACGDSEHDAELFSIPDVHGVMVSNSQEELLKWRSENALNNLKVIHSTERCADGIIQAIGHFNLGPDLSPRDVSEFLDRKMDNVNPGHEVVRFYLFYERLRRGEIKNYETYIASFKDSCLHAAVLFHPSGAEKSLRDTIDELKKCYGDKRGKKFWVWVDQVLVTDTIPGKWIVKFDKWEQCEDESQCCKTTVEFTSKGGDLVWEKVKQIWSEESKVKDDNSSWIL.

This sequence belongs to the sucrose phosphatase family. In terms of assembly, homodimer. Mg(2+) serves as cofactor.

The enzyme catalyses sucrose 6(F)-phosphate + H2O = sucrose + phosphate. It functions in the pathway glycan biosynthesis; sucrose biosynthesis; sucrose from D-fructose 6-phosphate and UDP-alpha-D-glucose: step 2/2. Functionally, catalyzes the final step of sucrose synthesis. The polypeptide is Probable sucrose-phosphatase 3b (SPP3B) (Arabidopsis thaliana (Mouse-ear cress)).